A 59-amino-acid polypeptide reads, in one-letter code: Cuticle protein 7 isoform b (59 aa).

Position 1 is a pyrrolidone carboxylic acid (Gln1).

The sequence is that of Cuticle protein 7 isoform b from Limulus polyphemus (Atlantic horseshoe crab).